The primary structure comprises 142 residues: MRELKHELLPTRHTQVFHEDKDKMEFNAPHHFVVVPAGSPLVDQQIHYGRGGNSKKVTVKDFAGKLATVNFQLGPVTEHGANGVMNEDLIAMVITRLQYFQNSEFNCRENAMAITKLEEALMWLNKRTAEREQRGVEGTHEK.

Residues Gln-72, Gly-74, Arg-96, Phe-100, Phe-105, Asn-110, Arg-127, Arg-131, and Gly-138 each contribute to the 3'cADPR site.

The protein belongs to the Tad1 family. In terms of assembly, homodimer.

Functionally, blocks activity of the Thoeris antiviral defense system (ThsA and ThsB, AC J8G6Z1, J8G8J6) when expressed in B.subtilis normally susceptible to SBSphiJ group phages. When added to phage SBSphiJ (which does not naturally encode this gene) confers resistance to Thoeris. Inhibits Thoeris upstream of ThsA. Probably acts by binding and sequestering cyclic ADP-D-ribose signal molecules produced upon viral infection (3'cADPR or 2'cADPR); sequestration prevents the signal from activating the ThsA of the Thoeris antiviral defense system. This chain is Thoeris anti-defense 1, found in Bacillus phage SBSphiJ7.